A 91-amino-acid chain; its full sequence is Small ribosomal subunit protein uS19 (91 aa).

This sequence belongs to the universal ribosomal protein uS19 family.

Protein S19 forms a complex with S13 that binds strongly to the 16S ribosomal RNA. This is Small ribosomal subunit protein uS19 from Cupriavidus necator (strain ATCC 17699 / DSM 428 / KCTC 22496 / NCIMB 10442 / H16 / Stanier 337) (Ralstonia eutropha).